A 1001-amino-acid chain; its full sequence is Open rectifier potassium channel protein 1 (1001 aa).

Over M1–W6 the chain is Cytoplasmic. Residues I7–I27 form a helical membrane-spanning segment. N-linked (GlcNAc...) asparagine glycosylation is present at N58. The segment at residues A95–I111 is an intramembrane region (pore-forming). A helical transmembrane segment spans residues M120–L140. The Cytoplasmic segment spans residues G141–Q170. A helical membrane pass occupies residues L171–L191. The segment at residues L208–V224 is an intramembrane region (pore-forming). A helical transmembrane segment spans residues I244 to I264. The Cytoplasmic segment spans residues T265–K1001. S332, S373, S562, and S565 each carry phosphoserine. The interval S591–M668 is disordered. S685, S691, and S715 each carry phosphoserine. 2 disordered regions span residues G768–Q795 and S830–K1001. Positions T832–A841 are enriched in low complexity. Residues A855–S873 are compositionally biased toward polar residues. A compositionally biased stretch (low complexity) spans R911–P926. Over residues R961 to K983 the composition is skewed to polar residues. Low complexity predominate over residues S984–K1001.

Belongs to the two pore domain potassium channel (TC 1.A.1.8) family. In terms of tissue distribution, widespread expression in adult, strongest expression in muscle, brain and ovary. Also present at low levels in larva and embryo.

Its subcellular location is the membrane. Functionally, background potassium channel. Rectification is dependent on external potassium concentration. Acts as an outwardly rectifying channel but as external potassium levels increase, this is reversed. This Drosophila melanogaster (Fruit fly) protein is Open rectifier potassium channel protein 1 (Ork1).